The chain runs to 352 residues: Holliday junction branch migration complex subunit RuvB (352 aa).

Residues 1 to 26 (MIETDKLRAAAPERLISPQPADRQED) form a disordered region. The segment at 4–193 (TDKLRAAAPE…FGIVSRLEFY (190 aa)) is large ATPase domain (RuvB-L). Residues leucine 32, arginine 33, glycine 74, lysine 77, threonine 78, threonine 79, 140–142 (EDF), arginine 183, tyrosine 193, and arginine 230 each bind ATP. Residue threonine 78 participates in Mg(2+) binding. The tract at residues 194–264 (TPDELGFIVS…VADAALRMLD (71 aa)) is small ATPAse domain (RuvB-S). Residues 267-352 (SLGLDLMDRK…RPGGTDLFGG (86 aa)) form a head domain (RuvB-H) region. Positions 322 and 327 each coordinate DNA.

It belongs to the RuvB family. As to quaternary structure, homohexamer. Forms an RuvA(8)-RuvB(12)-Holliday junction (HJ) complex. HJ DNA is sandwiched between 2 RuvA tetramers; dsDNA enters through RuvA and exits via RuvB. An RuvB hexamer assembles on each DNA strand where it exits the tetramer. Each RuvB hexamer is contacted by two RuvA subunits (via domain III) on 2 adjacent RuvB subunits; this complex drives branch migration. In the full resolvosome a probable DNA-RuvA(4)-RuvB(12)-RuvC(2) complex forms which resolves the HJ.

It localises to the cytoplasm. It carries out the reaction ATP + H2O = ADP + phosphate + H(+). Its function is as follows. The RuvA-RuvB-RuvC complex processes Holliday junction (HJ) DNA during genetic recombination and DNA repair, while the RuvA-RuvB complex plays an important role in the rescue of blocked DNA replication forks via replication fork reversal (RFR). RuvA specifically binds to HJ cruciform DNA, conferring on it an open structure. The RuvB hexamer acts as an ATP-dependent pump, pulling dsDNA into and through the RuvAB complex. RuvB forms 2 homohexamers on either side of HJ DNA bound by 1 or 2 RuvA tetramers; 4 subunits per hexamer contact DNA at a time. Coordinated motions by a converter formed by DNA-disengaged RuvB subunits stimulates ATP hydrolysis and nucleotide exchange. Immobilization of the converter enables RuvB to convert the ATP-contained energy into a lever motion, pulling 2 nucleotides of DNA out of the RuvA tetramer per ATP hydrolyzed, thus driving DNA branch migration. The RuvB motors rotate together with the DNA substrate, which together with the progressing nucleotide cycle form the mechanistic basis for DNA recombination by continuous HJ branch migration. Branch migration allows RuvC to scan DNA until it finds its consensus sequence, where it cleaves and resolves cruciform DNA. The sequence is that of Holliday junction branch migration complex subunit RuvB from Azoarcus sp. (strain BH72).